We begin with the raw amino-acid sequence, 164 residues long: Crossover junction endodeoxyribonuclease RuvC (164 aa).

Active-site residues include D7, E67, and D140. Positions 7, 67, and 140 each coordinate Mg(2+).

Belongs to the RuvC family. As to quaternary structure, homodimer which binds Holliday junction (HJ) DNA. The HJ becomes 2-fold symmetrical on binding to RuvC with unstacked arms; it has a different conformation from HJ DNA in complex with RuvA. In the full resolvosome a probable DNA-RuvA(4)-RuvB(12)-RuvC(2) complex forms which resolves the HJ. It depends on Mg(2+) as a cofactor.

It is found in the cytoplasm. The catalysed reaction is Endonucleolytic cleavage at a junction such as a reciprocal single-stranded crossover between two homologous DNA duplexes (Holliday junction).. In terms of biological role, the RuvA-RuvB-RuvC complex processes Holliday junction (HJ) DNA during genetic recombination and DNA repair. Endonuclease that resolves HJ intermediates. Cleaves cruciform DNA by making single-stranded nicks across the HJ at symmetrical positions within the homologous arms, yielding a 5'-phosphate and a 3'-hydroxyl group; requires a central core of homology in the junction. The consensus cleavage sequence is 5'-(A/T)TT(C/G)-3'. Cleavage occurs on the 3'-side of the TT dinucleotide at the point of strand exchange. HJ branch migration catalyzed by RuvA-RuvB allows RuvC to scan DNA until it finds its consensus sequence, where it cleaves and resolves the cruciform DNA. This is Crossover junction endodeoxyribonuclease RuvC from Chloroflexus aurantiacus (strain ATCC 29364 / DSM 637 / Y-400-fl).